The following is a 580-amino-acid chain: DNA ligase B (580 aa).

Catalysis depends on lysine 135, which acts as the N6-AMP-lysine intermediate.

Belongs to the NAD-dependent DNA ligase family. LigB subfamily.

It carries out the reaction NAD(+) + (deoxyribonucleotide)n-3'-hydroxyl + 5'-phospho-(deoxyribonucleotide)m = (deoxyribonucleotide)n+m + AMP + beta-nicotinamide D-nucleotide.. Catalyzes the formation of phosphodiester linkages between 5'-phosphoryl and 3'-hydroxyl groups in double-stranded DNA using NAD as a coenzyme and as the energy source for the reaction. The chain is DNA ligase B from Photorhabdus laumondii subsp. laumondii (strain DSM 15139 / CIP 105565 / TT01) (Photorhabdus luminescens subsp. laumondii).